A 189-amino-acid chain; its full sequence is Interferon alpha-1 (189 aa).

Residues 1-23 form the signal peptide; that stretch reads MAPAWSLLLALLLLSCNAICSLG. 2 cysteine pairs are disulfide-bonded: cysteine 24–cysteine 122 and cysteine 52–cysteine 162.

Belongs to the alpha/beta interferon family. Interacts with CR2.

It is found in the secreted. Its function is as follows. Produced by macrophages, IFN-alpha have antiviral activities. Interferon stimulates the production of two enzymes: a protein kinase and an oligoadenylate synthetase. The protein is Interferon alpha-1 of Bos taurus (Bovine).